A 445-amino-acid polypeptide reads, in one-letter code: UDP-N-acetylmuramoylalanine--D-glutamate ligase (445 aa).

Gly118–Thr124 is a binding site for ATP.

The protein belongs to the MurCDEF family.

The protein resides in the cytoplasm. It carries out the reaction UDP-N-acetyl-alpha-D-muramoyl-L-alanine + D-glutamate + ATP = UDP-N-acetyl-alpha-D-muramoyl-L-alanyl-D-glutamate + ADP + phosphate + H(+). Its pathway is cell wall biogenesis; peptidoglycan biosynthesis. In terms of biological role, cell wall formation. Catalyzes the addition of glutamate to the nucleotide precursor UDP-N-acetylmuramoyl-L-alanine (UMA). This is UDP-N-acetylmuramoylalanine--D-glutamate ligase from Macrococcus caseolyticus (strain JCSC5402) (Macrococcoides caseolyticum).